The following is a 122-amino-acid chain: SYFFFIVVPSLLRPEALFKLFFSLVKYFFMISALSKQILFIVLLTLFKSTSAYLWSCIRNSPWLSKKVSISTCKSALRGLFCKSSWRCAKMNGDLVTIVVALVLGDLVTKVVVVVLAEDIVE.

It localises to the mitochondrion. This is an uncharacterized protein from Claviceps purpurea (Ergot fungus).